The primary structure comprises 243 residues: Orotidine 5'-phosphate decarboxylase (243 aa).

Substrate-binding positions include Asp-19, Lys-41, 69–78, Thr-124, Arg-185, Gln-194, Gly-214, and Arg-215; that span reads DLKFFDIPAT. Residue Lys-71 is the Proton donor of the active site.

Belongs to the OMP decarboxylase family. Type 1 subfamily. Homodimer.

The enzyme catalyses orotidine 5'-phosphate + H(+) = UMP + CO2. Its pathway is pyrimidine metabolism; UMP biosynthesis via de novo pathway; UMP from orotate: step 2/2. Functionally, catalyzes the decarboxylation of orotidine 5'-monophosphate (OMP) to uridine 5'-monophosphate (UMP). The polypeptide is Orotidine 5'-phosphate decarboxylase (Xanthomonas axonopodis pv. citri (strain 306)).